Consider the following 146-residue polypeptide: Basic phospholipase A2 (146 aa).

Positions 1-21 (MNPAHLLVLAAVCVSLLGASS) are cleaved as a signal peptide. Positions 22-27 (VPPRPL) are excised as a propeptide. 7 disulfide bridges follow: Cys38–Cys97, Cys52–Cys145, Cys54–Cys70, Cys69–Cys127, Cys76–Cys120, Cys86–Cys113, and Cys106–Cys118. 3 residues coordinate Ca(2+): Tyr53, Gly55, and Gly57. His73 is an active-site residue. Position 74 (Asp74) interacts with Ca(2+). Residue Asn109 is glycosylated (N-linked (GlcNAc...) asparagine). Asp121 is a catalytic residue.

Belongs to the phospholipase A2 family. Group I subfamily. D49 sub-subfamily. Requires Ca(2+) as cofactor. In terms of tissue distribution, expressed by the venom gland.

It is found in the secreted. It carries out the reaction a 1,2-diacyl-sn-glycero-3-phosphocholine + H2O = a 1-acyl-sn-glycero-3-phosphocholine + a fatty acid + H(+). PLA2 catalyzes the calcium-dependent hydrolysis of the 2-acyl groups in 3-sn-phosphoglycerides. In Micrurus corallinus (Brazilian coral snake), this protein is Basic phospholipase A2.